Here is a 453-residue protein sequence, read N- to C-terminus: Tubulin gamma chain (453 aa).

GTP is bound at residue 142-148; sequence AGGTGSG.

The protein belongs to the tubulin family.

Its subcellular location is the cytoplasm. The protein resides in the cytoskeleton. It is found in the microtubule organizing center. It localises to the spindle pole body. Tubulin is the major constituent of microtubules. The gamma chain is found at microtubule organizing centers (MTOC) such as the spindle poles or the centrosome, suggesting that it is involved in the minus-end nucleation of microtubule assembly. The chain is Tubulin gamma chain (TUB4) from Coprinopsis cinerea (strain Okayama-7 / 130 / ATCC MYA-4618 / FGSC 9003) (Inky cap fungus).